The primary structure comprises 1106 residues: Protein translocase subunit SecA (1106 aa).

Residues glutamine 175, glycine 193–threonine 197, and aspartate 694 each bind ATP. Residues glutamine 1021 to alanine 1106 form a disordered region. Positions glutamine 1042–leucine 1056 are enriched in basic and acidic residues. Polar residues predominate over residues serine 1057 to glutamine 1067. A compositionally biased stretch (basic and acidic residues) spans aspartate 1068 to glycine 1085. 4 residues coordinate Zn(2+): cysteine 1090, cysteine 1092, cysteine 1101, and histidine 1102.

This sequence belongs to the SecA family. As to quaternary structure, monomer and homodimer. Part of the essential Sec protein translocation apparatus which comprises SecA, SecYEG and auxiliary proteins SecDF. Other proteins may also be involved. It depends on Zn(2+) as a cofactor.

Its subcellular location is the cell inner membrane. It localises to the cytoplasm. It carries out the reaction ATP + H2O + cellular proteinSide 1 = ADP + phosphate + cellular proteinSide 2.. Functionally, part of the Sec protein translocase complex. Interacts with the SecYEG preprotein conducting channel. Has a central role in coupling the hydrolysis of ATP to the transfer of proteins into and across the cell membrane, serving as an ATP-driven molecular motor driving the stepwise translocation of polypeptide chains across the membrane. This chain is Protein translocase subunit SecA, found in Bacteroides thetaiotaomicron (strain ATCC 29148 / DSM 2079 / JCM 5827 / CCUG 10774 / NCTC 10582 / VPI-5482 / E50).